The chain runs to 1141 residues: MSGLSTVPDNINFAREEDKVAQKWQDENTFQRSVELSKDRPHFTFYDGPPFATGLPHYGHMLTSTIKDVVGRWAHQNGHYVERRFGWDTHGLPVEYEIDKTLGISGPQDVMKMGIANYNNECRKIVMRYSGEWEKTMGRLGRWVDFKHDYKTLYPWFMESVWWAFSELHKKGLVYKGVKVMPFSTACSTPLSNFEAGQNYKDVVDPAVFVGFKLLDCPNRQLVAWTTTPWTLPSNLALVVHPDMLYVVTKDKTTGIEYVVLEERLGELKNDNLEVIEKLAGSQLKDLRYEPLFPYFAYMREERNAFRVLNDTFVTSDSGTGVVHQAPYFGEIDFQVCVANGVIAKDQKMICPVDESGKYTSEVPDYQGVYVKDADKLIIKRLKEMGNLVRQAEVKHSYPFCWRSDTPLLYKAVPSWFINVETLIPRLLANNDETYWVPAFVKEKRFANWLRDARDWAVSRNRFWGTPINLWVSEDGEEVVCVGSIAELEELSGQKITDLHRESVDDVTIPSRSGRGVLKRVSEVFDCWFESGSMPYAQNHYPFENRKIFEDNFPADFIAEGIDQTRGWFYTLLVLSTALFNKPPFKNLICNGLVLASDGAKMSKSKKNYPDPMLIVNKYGADALRLYLINSPVVRGENLRFREEGVRDLLKDVFLPWFNAYRFFVQNVQAYEHETGNVFDMNVHVASENVMDRWIESFTNSLVAFVRKEMDSYRLYAVVGPLTKFFDTLTNIYIRLNRKRVKGDNGLHEQHHALAALGRVLILIVRLMAPFTPFFCEYIWLNLKKVIGSTEESVHFLMLPKPDESLIDETVERRVEVMRNVIDLVRLVRDREGLAVKYPLKEMIVINRDSQFLEDVKSLESYILLELNVRKLTVSQDKQKYGITLKAEPNFKILGARLKGEQKKVADYLKNQITESELEKFLLEGKLTVLGHELSSEEVAVSYAAGSDQGHGYKTHSDAKTIVMIDTTEDESLIEEGLCREVTNRVQRLRKQAKLVSTDTAHVHIVVSPADSQLAKVVAAKLNDIVSATGTPIKLGSPPAAAKAPTATSKSAIKDSEVELWLFAEGDSFDGITVVDGSKKVRVHVKTEKEHLKGYADLLYHVRSALDLWNGKIALKNVDGSAVHPTVDVTSLVGQTLQLVR.

Residues 50 to 60 carry the 'HIGH' region motif; it reads PFATGLPHYGH. The short motif at 601 to 605 is the 'KMSKS' region element; it reads KMSKS. Position 604 (K604) interacts with ATP.

This sequence belongs to the class-I aminoacyl-tRNA synthetase family.

It is found in the cytoplasm. The catalysed reaction is tRNA(Ile) + L-isoleucine + ATP = L-isoleucyl-tRNA(Ile) + AMP + diphosphate. The chain is Isoleucine--tRNA ligase, cytoplasmic from Caenorhabditis elegans.